The following is a 420-amino-acid chain: MVAVVRSLMVLLLAQVLLEGATGLIPEVGRRRYSESGKQSPQQSEGFLNEFELRLLNMFGLKRRPTPSKQAVVPQYMVDLYRMHSANGDHSAKRPKSMGRHAERAASKANTIRSFHHEESMEALARLKGKTTQQFYFNLTSIPKEELITSAELRIYRDQVMGAASTNNSSTNSSTSDKAHAGGFHRINIYEIFGVPQGREPLARLLDTRLVQDSLTRWESFDVSSAVFQWTSGKGHNHGFMIEVLHPEEGEVEQERADKHSRHVRVSRSLHQDRDSWPQARPLLVTYGHDGRGDSVLHTREKRQAALRKQRRKHQHKASCKRHALYVDFSDVGWNEWIVAPPGYHAFYCQGECPFPLADHLNSTNHAIVQTLVNSVNSNIPRACCVPTDLSPISLLYLDEYEKVILKNYQDMVVEGCGCR.

Residues 1–23 (MVAVVRSLMVLLLAQVLLEGATG) form the signal peptide. Residues 24-303 (LIPEVGRRRY…DSVLHTREKR (280 aa)) constitute a propeptide that is removed on maturation. N-linked (GlcNAc...) asparagine glycosylation is found at Asn138, Asn167, Asn168, Asn172, and Asn362. Cystine bridges form between Cys320-Cys385, Cys349-Cys417, and Cys353-Cys419.

The protein belongs to the TGF-beta family. Homodimer; disulfide-linked.

It localises to the secreted. Its function is as follows. Induces cartilage and bone formation. The chain is Bone morphogenetic protein 2 (bmp2) from Tetraodon nigroviridis (Spotted green pufferfish).